The following is a 184-amino-acid chain: H(2)/formate:CoB-CoM heterodisulfide,ferredoxin reductase subunit C2 (184 aa).

4Fe-4S ferredoxin-type domains lie at 24–54 (GEKE…AYRT) and 65–97 (IDSV…TEII). The [4Fe-4S] cluster site is built by cysteine 34, cysteine 37, cysteine 40, cysteine 44, cysteine 77, cysteine 80, cysteine 83, and cysteine 87.

This sequence belongs to the HdrC family. As to quaternary structure, the heterodisulfide reductase is composed of three subunits; HdrA, HdrB and HdrC. B1 and B2 subunits are interchangeable, as are the C1 and C2 subunits. The heterodisulfide reductase forms a supercomplex with formylmethanofuran dehydrogenase (Fwd), F(420)-non-reducing hydrogenase (Vhu) and formate dehydrogenase (Fdh). The cofactor is [4Fe-4S] cluster.

It carries out the reaction coenzyme B + coenzyme M + 2 reduced [2Fe-2S]-[ferredoxin] + 2 H(+) = coenzyme M-coenzyme B heterodisulfide + 2 H2 + 2 oxidized [2Fe-2S]-[ferredoxin]. It catalyses the reaction coenzyme B + coenzyme M + 2 reduced [2Fe-2S]-[ferredoxin] + 2 CO2 = coenzyme M-coenzyme B heterodisulfide + 2 formate + 2 oxidized [2Fe-2S]-[ferredoxin]. It participates in cofactor metabolism; coenzyme M-coenzyme B heterodisulfide reduction; coenzyme B and coenzyme M from coenzyme M-coenzyme B heterodisulfide: step 1/1. Part of a complex that catalyzes the reversible reduction of CoM-S-S-CoB to the thiol-coenzymes H-S-CoM (coenzyme M) and H-S-CoB (coenzyme B). In Methanococcus maripaludis (strain DSM 14266 / JCM 13030 / NBRC 101832 / S2 / LL), this protein is H(2)/formate:CoB-CoM heterodisulfide,ferredoxin reductase subunit C2.